A 433-amino-acid chain; its full sequence is MTASPLAQTPNDMFNAPIAEADPEIAEILDAELSRQQNGLEMIASENFVPRAVLQAQGSVLTNKYAEGYPGRRYYGGCEQVDKIETIARERAKSLFGAEYANVQPHSGAQANAAVYQALVKPGDTVLGLALDHGGHLTHGMKINFSGRFYHAEAYGVNPETFRIDPEIIRQRALETHPAMIIGGWSAYPRIEDFKAMKEIADEVGAKFWVDMAHFAGLVAAGLHPSPVPYADVVSSTAHKTLGGPRSGFILAKQEYAKKLNSAVFPGQQGGPLMHVIAGKAVAFKVAATPEFKDRMQRTLDGAKILAERLMADDVKNNGISVLTGGTDVHLVMVDLRNSEMDGKQGEDLLAQCGITINRNTVPFDPRPASVASGLRIGTSALATRGFGPKEYEEVADIIGTALAAGQDVDALKARVDKLAEDFPLYPGLDQIH.

(6S)-5,6,7,8-tetrahydrofolate-binding positions include Leu-131 and 135–137 (GHL). An N6-(pyridoxal phosphate)lysine modification is found at Lys-240.

This sequence belongs to the SHMT family. As to quaternary structure, homodimer. It depends on pyridoxal 5'-phosphate as a cofactor.

The protein localises to the cytoplasm. It catalyses the reaction (6R)-5,10-methylene-5,6,7,8-tetrahydrofolate + glycine + H2O = (6S)-5,6,7,8-tetrahydrofolate + L-serine. It participates in one-carbon metabolism; tetrahydrofolate interconversion. Its pathway is amino-acid biosynthesis; glycine biosynthesis; glycine from L-serine: step 1/1. Its function is as follows. Catalyzes the reversible interconversion of serine and glycine with tetrahydrofolate (THF) serving as the one-carbon carrier. This reaction serves as the major source of one-carbon groups required for the biosynthesis of purines, thymidylate, methionine, and other important biomolecules. Also exhibits THF-independent aldolase activity toward beta-hydroxyamino acids, producing glycine and aldehydes, via a retro-aldol mechanism. The polypeptide is Serine hydroxymethyltransferase (Bifidobacterium adolescentis (strain ATCC 15703 / DSM 20083 / NCTC 11814 / E194a)).